A 95-amino-acid polypeptide reads, in one-letter code: MRSYETMYVLSPDLNEEERKGLIERFKNLIVERGGEITNFDEWGKRKLAYPIQKKSEGYYVLMNFNSSPDVSRELERVYRITDGVLRYLIIRTDD.

Belongs to the bacterial ribosomal protein bS6 family.

Its function is as follows. Binds together with bS18 to 16S ribosomal RNA. This chain is Small ribosomal subunit protein bS6, found in Caldanaerobacter subterraneus subsp. tengcongensis (strain DSM 15242 / JCM 11007 / NBRC 100824 / MB4) (Thermoanaerobacter tengcongensis).